The following is a 293-amino-acid chain: uncharacterized protein (293 aa).

Disordered regions lie at residues 121–154 (NLNFDPHQMSKPSYHHHSHSHSHHSHSHSHSQNS) and 254–274 (DILQTVPPSPTPTPPPPPQQQ). Positions 133 to 149 (SYHHHSHSHSHHSHSHS) are enriched in basic residues. A compositionally biased stretch (pro residues) spans 260–272 (PPSPTPTPPPPPQ).

This is an uncharacterized protein from Dictyostelium discoideum (Social amoeba).